The primary structure comprises 54 residues: UPF0391 membrane protein BMEI0373 (54 aa).

A run of 2 helical transmembrane segments spans residues 5 to 25 (VLVF…GIAG) and 29 to 48 (GIAQ…SLIA).

It belongs to the UPF0391 family.

The protein resides in the cell membrane. The protein is UPF0391 membrane protein BMEI0373 of Brucella melitensis biotype 1 (strain ATCC 23456 / CCUG 17765 / NCTC 10094 / 16M).